Here is a 78-residue protein sequence, read N- to C-terminus: Chondrosarcoma-associated gene 1 protein (78 aa).

Residues 1 to 19 (MSATTACWPAFTVLGEARG) form the signal peptide. The disordered stretch occupies residues 35–78 (KMSRKPRASSPFSNNHPSTPKRFPRQPRREKGPVKEVPGTKGSP).

In terms of tissue distribution, expressed in chondrosarcoma, melanoma, cartilage and testis, but not in other normal tissues.

The protein resides in the cytoplasm. The protein localises to the cytoskeleton. It localises to the microtubule organizing center. It is found in the centrosome. Its subcellular location is the spindle pole. Functionally, may play an important role in maintaining centrosome integrity during mitosis. The sequence is that of Chondrosarcoma-associated gene 1 protein from Homo sapiens (Human).